Consider the following 102-residue polypeptide: MSSGMCPVCGLPKELCICEEVAKEQQRITVKVNRRRYGKEVTVVEGFDASEIDLHELSTYLKSKFACGGTVKGNTVELQGNHLARMKEVLMEKGFSAEQIKN.

This sequence belongs to the SUI1 family.

This chain is Protein translation factor SUI1 homolog, found in Methanosarcina acetivorans (strain ATCC 35395 / DSM 2834 / JCM 12185 / C2A).